Reading from the N-terminus, the 330-residue chain is tRNA uridine(34) hydroxylase (330 aa).

Positions 123–217 constitute a Rhodanese domain; sequence SDPEVILVDT…YLEEVKQEES (95 aa). Catalysis depends on Cys-177, which acts as the Cysteine persulfide intermediate.

This sequence belongs to the TrhO family.

It carries out the reaction uridine(34) in tRNA + AH2 + O2 = 5-hydroxyuridine(34) in tRNA + A + H2O. Functionally, catalyzes oxygen-dependent 5-hydroxyuridine (ho5U) modification at position 34 in tRNAs. The chain is tRNA uridine(34) hydroxylase from Shewanella sp. (strain MR-4).